Reading from the N-terminus, the 381-residue chain is L-lactate dehydrogenase (381 aa).

Residues 1–380 (MIISSANDYR…TRDALVDLSK (380 aa)) form the FMN hydroxy acid dehydrogenase domain. Tyr-24 contacts substrate. The FMN site is built by Ser-106 and Gln-127. Tyr-129 is a binding site for substrate. Thr-155 lines the FMN pocket. Arg-164 contacts substrate. Lys-251 is a binding site for FMN. Residue His-275 is the Proton acceptor of the active site. Residue Arg-278 participates in substrate binding. 306-330 (DSGIRNGLDIVRMLALGADATMLGR) is an FMN binding site.

It belongs to the FMN-dependent alpha-hydroxy acid dehydrogenase family. The cofactor is FMN.

It is found in the cell inner membrane. The enzyme catalyses (S)-lactate + A = pyruvate + AH2. Its function is as follows. Catalyzes the conversion of L-lactate to pyruvate. Is coupled to the respiratory chain. This chain is L-lactate dehydrogenase, found in Actinobacillus pleuropneumoniae serotype 5b (strain L20).